A 409-amino-acid chain; its full sequence is Patellin-6 (409 aa).

The CRAL-TRIO domain occupies 116 to 294; the sequence is EKLTEEDLGF…QYGGLSRPTD (179 aa). The 135-residue stretch at 270-404 folds into the GOLD domain; that stretch reads AETLYKFIRP…VAAYRYTVRK (135 aa).

It belongs to the patellin family.

It is found in the membrane. The protein localises to the cytoplasm. In terms of biological role, carrier protein that may be involved in membrane-trafficking events associated with cell-plate formation during cytokinesis. Binds to some hydrophobic molecules such as phosphoinositides and promotes their transfer between the different cellular sites. This Arabidopsis thaliana (Mouse-ear cress) protein is Patellin-6 (PATL6).